The following is a 257-amino-acid chain: Galactitol 2-dehydrogenase (257 aa).

NAD(+)-binding positions include 21 to 23 (RAI), 67 to 68 (DV), asparagine 94, tyrosine 162, and lysine 166. Tyrosine 162 (proton acceptor) is an active-site residue.

Belongs to the short-chain dehydrogenases/reductases (SDR) family. Homotetramer. Mg(2+) is required as a cofactor.

The catalysed reaction is galactitol + NAD(+) = keto-D-tagatose + NADH + H(+). Its function is as follows. Catalyzes the oxidation of galactitol to D-tagatose. Also catalyzes the oxidation of a wide range of substrates, including polyvalent aliphatic alcohols and polyols, to the corresponding ketones and ketoses. Galactitol is the preferred substrate. The protein is Galactitol 2-dehydrogenase of Rhizobium johnstonii (strain DSM 114642 / LMG 32736 / 3841) (Rhizobium leguminosarum bv. viciae).